The primary structure comprises 630 residues: Cyclin-T1-2 (630 aa).

Residues 288-297 (QSSLSVSSSS) show a composition bias toward low complexity. 2 disordered regions span residues 288-313 (QSSLSVSSSSPEIGDPNDHLQVDSSQ) and 410-439 (RSGDKTKLCSEGGSSLTDVDSKSTQSVEPP). A compositionally biased stretch (polar residues) spans 421-439 (GGSSLTDVDSKSTQSVEPP).

It belongs to the cyclin family. Cyclin T subfamily.

The polypeptide is Cyclin-T1-2 (CYCT1_2) (Oryza sativa subsp. japonica (Rice)).